We begin with the raw amino-acid sequence, 386 residues long: L-lactate dehydrogenase (386 aa).

Residues 1 to 380 (MIISAASDYR…SGDALSRVTR (380 aa)) form the FMN hydroxy acid dehydrogenase domain. Tyrosine 24 contributes to the substrate binding site. FMN-binding residues include serine 106 and glutamine 127. A substrate-binding site is contributed by tyrosine 129. FMN is bound at residue threonine 155. A substrate-binding site is contributed by arginine 164. Lysine 251 is an FMN binding site. The active-site Proton acceptor is the histidine 275. Arginine 278 contacts substrate. Position 306–330 (306–330 (DSGIRSGLDVVRMLALGADAVLLGR)) interacts with FMN.

It belongs to the FMN-dependent alpha-hydroxy acid dehydrogenase family. The cofactor is FMN.

The protein localises to the cell inner membrane. The enzyme catalyses (S)-lactate + A = pyruvate + AH2. Catalyzes the conversion of L-lactate to pyruvate. Is coupled to the respiratory chain. In Xanthomonas campestris pv. campestris (strain B100), this protein is L-lactate dehydrogenase.